We begin with the raw amino-acid sequence, 166 residues long: CDP-archaeol synthase (166 aa).

The next 5 membrane-spanning stretches (helical) occupy residues 7–27, 55–75, 78–98, 116–136, and 138–158; these read LLLSILIYLPAFVANGSGPFI, LIVALTFGTTVGVIISKFFTA, TLISFLESLFAMIGDMIGAFI, LDFVLGASLILVLMRVNITWY, and FLFICGLAFFLHQGTNYVAYL.

Belongs to the CDP-archaeol synthase family. Mg(2+) is required as a cofactor.

It localises to the cell membrane. It catalyses the reaction 2,3-bis-O-(geranylgeranyl)-sn-glycerol 1-phosphate + CTP + H(+) = CDP-2,3-bis-O-(geranylgeranyl)-sn-glycerol + diphosphate. It functions in the pathway membrane lipid metabolism; glycerophospholipid metabolism. Functionally, catalyzes the formation of CDP-2,3-bis-(O-geranylgeranyl)-sn-glycerol (CDP-archaeol) from 2,3-bis-(O-geranylgeranyl)-sn-glycerol 1-phosphate (DGGGP) and CTP. This reaction is the third ether-bond-formation step in the biosynthesis of archaeal membrane lipids. The sequence is that of CDP-archaeol synthase from Saccharolobus islandicus (strain L.S.2.15 / Lassen #1) (Sulfolobus islandicus).